Reading from the N-terminus, the 40-residue chain is Photosystem II reaction center protein J (40 aa).

A helical membrane pass occupies residues 10–30; sequence LWIIGTVTGILVIGLIGIFFF.

This sequence belongs to the PsbJ family. In terms of assembly, PSII is composed of 1 copy each of membrane proteins PsbA, PsbB, PsbC, PsbD, PsbE, PsbF, PsbH, PsbI, PsbJ, PsbK, PsbL, PsbM, PsbT, PsbX, PsbY, PsbZ, Psb30/Ycf12, at least 3 peripheral proteins of the oxygen-evolving complex and a large number of cofactors. It forms dimeric complexes.

It is found in the plastid membrane. Functionally, one of the components of the core complex of photosystem II (PSII). PSII is a light-driven water:plastoquinone oxidoreductase that uses light energy to abstract electrons from H(2)O, generating O(2) and a proton gradient subsequently used for ATP formation. It consists of a core antenna complex that captures photons, and an electron transfer chain that converts photonic excitation into a charge separation. In Cuscuta exaltata (Tall dodder), this protein is Photosystem II reaction center protein J.